The primary structure comprises 89 residues: Small ribosomal subunit protein bS18 (89 aa).

It belongs to the bacterial ribosomal protein bS18 family. Part of the 30S ribosomal subunit. Forms a tight heterodimer with protein bS6.

Binds as a heterodimer with protein bS6 to the central domain of the 16S rRNA, where it helps stabilize the platform of the 30S subunit. This chain is Small ribosomal subunit protein bS18, found in Treponema denticola (strain ATCC 35405 / DSM 14222 / CIP 103919 / JCM 8153 / KCTC 15104).